Reading from the N-terminus, the 83-residue chain is Small ribosomal subunit protein eS21 (83 aa).

This sequence belongs to the eukaryotic ribosomal protein eS21 family. Component of the 40S small ribosomal subunit.

It is found in the cytoplasm. The protein resides in the cytosol. The protein localises to the rough endoplasmic reticulum. In Ixodes scapularis (Black-legged tick), this protein is Small ribosomal subunit protein eS21 (RpS21).